Consider the following 208-residue polypeptide: Large ribosomal subunit protein uL4 (208 aa).

A disordered region spans residues 44-85 (RQGTKKTKTRAEVRGGGKKPWRQKGTGRARQGSIRAPHWRGG). Positions 59-70 (GGKKPWRQKGTG) are enriched in basic residues.

It belongs to the universal ribosomal protein uL4 family. In terms of assembly, part of the 50S ribosomal subunit.

One of the primary rRNA binding proteins, this protein initially binds near the 5'-end of the 23S rRNA. It is important during the early stages of 50S assembly. It makes multiple contacts with different domains of the 23S rRNA in the assembled 50S subunit and ribosome. Functionally, forms part of the polypeptide exit tunnel. The chain is Large ribosomal subunit protein uL4 from Mesoplasma florum (strain ATCC 33453 / NBRC 100688 / NCTC 11704 / L1) (Acholeplasma florum).